Here is a 427-residue protein sequence, read N- to C-terminus: Forkhead box protein A1-B (427 aa).

The fork-head DNA-binding region spans 157 to 251 (KPPYSYISLI…ENGCYLRRQK (95 aa)). Over residues 256–272 (EKTQGGKGNQDGRKDHS) the composition is skewed to basic and acidic residues. Positions 256 to 336 (EKTQGGKGNQ…HQNHSTHSLA (81 aa)) are disordered. The segment covering 285 to 302 (SSQMDSSSSMSNPSSSPQ) has biased composition (low complexity). The segment covering 323–334 (PLSSHQNHSTHS) has biased composition (polar residues).

As to expression, present in the vegetal pole and marginal zone but not the animal pole of gastrulae and in equal levels in the dorsal and ventral halves of both gastrulae and neurulae. At neurula stage, expressed in the notochord. During tailbud stages, expressed in the foregut, brain, hypocord, neural floor plate and in two lines of cells just dorsal and ventral to the notochord. Expressed in the adult liver.

Its subcellular location is the nucleus. Probable transcription factor. The polypeptide is Forkhead box protein A1-B (foxa1-b) (Xenopus laevis (African clawed frog)).